A 112-amino-acid chain; its full sequence is uncharacterized protein (112 aa).

This is an uncharacterized protein from Bacillus subtilis (strain 168).